Here is a 270-residue protein sequence, read N- to C-terminus: Type III pantothenate kinase (270 aa).

Residue 11–18 coordinates ATP; that stretch reads DAGNSRIK. Residues Tyr-96 and 103-106 each bind substrate; that span reads GSDR. Residue Asp-105 is the Proton acceptor of the active site. Thr-129 is a binding site for ATP. Residue Thr-195 participates in substrate binding.

The protein belongs to the type III pantothenate kinase family. In terms of assembly, homodimer. NH4(+) serves as cofactor. K(+) is required as a cofactor.

Its subcellular location is the cytoplasm. The enzyme catalyses (R)-pantothenate + ATP = (R)-4'-phosphopantothenate + ADP + H(+). It participates in cofactor biosynthesis; coenzyme A biosynthesis; CoA from (R)-pantothenate: step 1/5. In terms of biological role, catalyzes the phosphorylation of pantothenate (Pan), the first step in CoA biosynthesis. The protein is Type III pantothenate kinase of Paraburkholderia phytofirmans (strain DSM 17436 / LMG 22146 / PsJN) (Burkholderia phytofirmans).